The chain runs to 632 residues: Lipoma-preferred partner homolog (632 aa).

Disordered regions lie at residues 1 to 118 (MSHP…RSSL) and 135 to 249 (SSPY…RSYN). Residues 26 to 40 (THSFGTPSISVSTQQ) are compositionally biased toward polar residues. Positions 41–53 (PPKKFAPVVAPKP) are enriched in low complexity. An N6-acetyllysine modification is found at lysine 109. Residues serine 117 and serine 152 each carry the phosphoserine modification. The segment covering 144–160 (PGSSSSIASPPVSTPVT) has biased composition (low complexity). Polar residues-rich tracts occupy residues 172–182 (PLTATKKSATK) and 206–239 (SYSTASTSSRPAFNVQVKSAQPSTHYMTGSSSGQ). Tyrosine 241 bears the Phosphotyrosine mark. Arginine 246 carries the post-translational modification Omega-N-methylarginine. Residue lysine 324 forms a Glycyl lysine isopeptide (Lys-Gly) (interchain with G-Cter in SUMO1) linkage. LIM zinc-binding domains are found at residues 434 to 493 (GRCA…INTL), 494 to 554 (EQCS…KFAP), and 555 to 623 (RCSV…RIRV).

The protein belongs to the zyxin/ajuba family. Interacts with PDZ domains of SCRIB, with VASP and with ACTN1/alpha-actinin.

The protein localises to the nucleus. Its subcellular location is the cytoplasm. It is found in the cell junction. Its function is as follows. May play a structural role at sites of cell adhesion in maintaining cell shape and motility. In addition to these structural functions, it may also be implicated in signaling events and activation of gene transcription. May be involved in signal transduction from cell adhesion sites to the nucleus allowing successful integration of signals arising from soluble factors and cell-cell adhesion. Also suggested to serve as a scaffold protein upon which distinct protein complexes are assembled in the cytoplasm and in the nucleus. The chain is Lipoma-preferred partner homolog (Lpp) from Rattus norvegicus (Rat).